The following is a 409-amino-acid chain: Tryptophan synthase beta chain (409 aa).

K98 is modified (N6-(pyridoxal phosphate)lysine).

It belongs to the TrpB family. In terms of assembly, tetramer of two alpha and two beta chains. It depends on pyridoxal 5'-phosphate as a cofactor.

It catalyses the reaction (1S,2R)-1-C-(indol-3-yl)glycerol 3-phosphate + L-serine = D-glyceraldehyde 3-phosphate + L-tryptophan + H2O. Its pathway is amino-acid biosynthesis; L-tryptophan biosynthesis; L-tryptophan from chorismate: step 5/5. Its function is as follows. The beta subunit is responsible for the synthesis of L-tryptophan from indole and L-serine. The chain is Tryptophan synthase beta chain from Jannaschia sp. (strain CCS1).